The sequence spans 896 residues: Protein translocase subunit SecA (896 aa).

Residues Gln87, 105-109, and Asp512 each bind ATP; that span reads GEGKT. The interval 867–889 is disordered; the sequence is QEPARSNRVAGRNDPCPCGSGKK. The Zn(2+) site is built by Cys882, Cys884, Cys893, and Cys894.

This sequence belongs to the SecA family. Monomer and homodimer. Part of the essential Sec protein translocation apparatus which comprises SecA, SecYEG and auxiliary proteins SecDF-YajC and YidC. Requires Zn(2+) as cofactor.

The protein localises to the cell inner membrane. Its subcellular location is the cytoplasm. The catalysed reaction is ATP + H2O + cellular proteinSide 1 = ADP + phosphate + cellular proteinSide 2.. In terms of biological role, part of the Sec protein translocase complex. Interacts with the SecYEG preprotein conducting channel. Has a central role in coupling the hydrolysis of ATP to the transfer of proteins into and across the cell membrane, serving as an ATP-driven molecular motor driving the stepwise translocation of polypeptide chains across the membrane. The chain is Protein translocase subunit SecA from Pelobacter propionicus (strain DSM 2379 / NBRC 103807 / OttBd1).